Here is a 192-residue protein sequence, read N- to C-terminus: Fe/S biogenesis protein NfuA (192 aa).

Residues Cys149 and Cys152 each contribute to the [4Fe-4S] cluster site.

The protein belongs to the NfuA family. As to quaternary structure, homodimer. Requires [4Fe-4S] cluster as cofactor.

In terms of biological role, involved in iron-sulfur cluster biogenesis. Binds a 4Fe-4S cluster, can transfer this cluster to apoproteins, and thereby intervenes in the maturation of Fe/S proteins. Could also act as a scaffold/chaperone for damaged Fe/S proteins. The sequence is that of Fe/S biogenesis protein NfuA from Tolumonas auensis (strain DSM 9187 / NBRC 110442 / TA 4).